Reading from the N-terminus, the 465-residue chain is Adenosylhomocysteinase (465 aa).

Substrate contacts are provided by Thr-56, Asp-131, and Glu-191. 192–194 (TTT) contributes to the NAD(+) binding site. Substrate is bound by residues Lys-221 and Asp-225. Residues Asn-226, 255 to 260 (GYGDVG), Glu-278, Asn-313, 334 to 336 (IGH), and Asn-379 contribute to the NAD(+) site.

The protein belongs to the adenosylhomocysteinase family. Requires NAD(+) as cofactor.

The protein localises to the cytoplasm. It carries out the reaction S-adenosyl-L-homocysteine + H2O = L-homocysteine + adenosine. It functions in the pathway amino-acid biosynthesis; L-homocysteine biosynthesis; L-homocysteine from S-adenosyl-L-homocysteine: step 1/1. May play a key role in the regulation of the intracellular concentration of adenosylhomocysteine. The polypeptide is Adenosylhomocysteinase (Bartonella tribocorum (strain CIP 105476 / IBS 506)).